A 276-amino-acid polypeptide reads, in one-letter code: Large ribosomal subunit protein uL2cy (276 aa).

Disordered stretches follow at residues 1–25 (MAIHLYKTSTPSTRNGTVDSQVKSN) and 225–276 (MNPV…RRSK). Positions 7 to 25 (KTSTPSTRNGTVDSQVKSN) are enriched in polar residues.

This sequence belongs to the universal ribosomal protein uL2 family. In terms of assembly, part of the 50S ribosomal subunit.

Its subcellular location is the plastid. The protein localises to the chloroplast. This Coffea arabica (Arabian coffee) protein is Large ribosomal subunit protein uL2cy (rpl2-B).